Consider the following 155-residue polypeptide: Protein U1 (155 aa).

Belongs to the nanovirus U1 protein family.

This is Protein U1 (DNA-U1) from Cicer arietinum (Chickpea).